The sequence spans 203 residues: Guanylate kinase (203 aa).

The Guanylate kinase-like domain occupies 4–183 (GKLFVISAPS…ASTLLKSIIW (180 aa)). Residue 11–18 (APSGAGKT) participates in ATP binding.

It belongs to the guanylate kinase family.

The protein resides in the cytoplasm. It catalyses the reaction GMP + ATP = GDP + ADP. In terms of biological role, essential for recycling GMP and indirectly, cGMP. The protein is Guanylate kinase of Desulfotalea psychrophila (strain LSv54 / DSM 12343).